Consider the following 260-residue polypeptide: Indole-3-glycerol phosphate synthase (260 aa).

This sequence belongs to the TrpC family.

The enzyme catalyses 1-(2-carboxyphenylamino)-1-deoxy-D-ribulose 5-phosphate + H(+) = (1S,2R)-1-C-(indol-3-yl)glycerol 3-phosphate + CO2 + H2O. It functions in the pathway amino-acid biosynthesis; L-tryptophan biosynthesis; L-tryptophan from chorismate: step 4/5. This chain is Indole-3-glycerol phosphate synthase, found in Desulfotalea psychrophila (strain LSv54 / DSM 12343).